The chain runs to 376 residues: Formate dehydrogenase 2 (376 aa).

Substrate is bound by residues Val97 and Asn121. Residues Arg176 to Ile177, Asp197, Pro244 to Asp248, Thr270, Asp296, and His325 to Gly328 each bind NAD(+).

Belongs to the D-isomer specific 2-hydroxyacid dehydrogenase family. FDH subfamily. Homodimer.

Its subcellular location is the cytoplasm. It catalyses the reaction formate + NAD(+) = CO2 + NADH. Catalyzes the NAD(+)-dependent oxidation of formate to carbon dioxide. Formate oxidation is the final step in the methanol oxidation pathway in methylotrophic microorganisms. Has a role in the detoxification of exogenous formate in non-methylotrophic organisms. The protein is Formate dehydrogenase 2 (FDH2) of Saccharomyces cerevisiae (strain CEN.PK113-7D) (Baker's yeast).